Reading from the N-terminus, the 147-residue chain is uncharacterized protein (147 aa).

This is an uncharacterized protein from Acidianus filamentous virus 2 (isolate Italy/Pozzuoli) (AFV-2).